Reading from the N-terminus, the 485-residue chain is Protein hunchback (485 aa).

Residues 1–77 (TSSTARKTPE…EEDDDIRTPK (77 aa)) form a disordered region. Polar residues predominate over residues 16 to 37 (QDQNQLLKTPIQTNGNQQSTFD). Acidic residues predominate over residues 59–72 (ADVDDENDAEEDDD). 4 C2H2-type zinc fingers span residues 87 to 109 (YKCK…NRIH), 116 to 138 (LKCQ…LRNH), 144 to 166 (FQCK…MKSH), and 172 to 196 (YRCK…KYSH). 3 disordered regions span residues 229-270 (KDEG…PPSS), 318-361 (NGWQ…QVKH), and 398-422 (PKPV…EDDS). A compositionally biased stretch (polar residues) spans 257-270 (NFEQSQHVPTPPSS). Residues 325 to 335 (NCNEEETPEKE) are compositionally biased toward acidic residues. Positions 345–358 (DLSSNPSTPSTVSQ) are enriched in polar residues. Positions 402-416 (QLQLPTSSTTTPLKT) are enriched in low complexity. C2H2-type zinc fingers lie at residues 432–454 (YECK…MGYH) and 460–484 (FKCN…RDAH).

This sequence belongs to the hunchback C2H2-type zinc-finger protein family.

The protein localises to the nucleus. Its function is as follows. Gap class segmentation protein that controls development of head structures. This is Protein hunchback (hb) from Clogmia albipunctata (Mothmidge).